Consider the following 32-residue polypeptide: MIRMDIVGITWAALMVVFTFSLSLVVWGRSGL.

Residues 6 to 26 (IVGITWAALMVVFTFSLSLVV) traverse the membrane as a helical segment.

It belongs to the PetN family. In terms of assembly, the 4 large subunits of the cytochrome b6-f complex are cytochrome b6, subunit IV (17 kDa polypeptide, PetD), cytochrome f and the Rieske protein, while the 4 small subunits are PetG, PetL, PetM and PetN. The complex functions as a dimer.

The protein resides in the plastid. The protein localises to the chloroplast thylakoid membrane. Component of the cytochrome b6-f complex, which mediates electron transfer between photosystem II (PSII) and photosystem I (PSI), cyclic electron flow around PSI, and state transitions. The protein is Cytochrome b6-f complex subunit 8 of Pinus koraiensis (Korean pine).